Here is a 359-residue protein sequence, read N- to C-terminus: Probable dual-specificity RNA methyltransferase RlmN (359 aa).

Glutamate 91 acts as the Proton acceptor in catalysis. The Radical SAM core domain maps to 97-329 (QHYGHSVCVT…KKNGVNCVVR (233 aa)). Cysteines 104 and 340 form a disulfide. [4Fe-4S] cluster is bound by residues cysteine 111, cysteine 115, and cysteine 118. Residues 163-164 (GE), serine 195, 218-220 (SLH), and asparagine 296 contribute to the S-adenosyl-L-methionine site. Cysteine 340 functions as the S-methylcysteine intermediate in the catalytic mechanism.

This sequence belongs to the radical SAM superfamily. RlmN family. Requires [4Fe-4S] cluster as cofactor.

The protein resides in the cytoplasm. The catalysed reaction is adenosine(2503) in 23S rRNA + 2 reduced [2Fe-2S]-[ferredoxin] + 2 S-adenosyl-L-methionine = 2-methyladenosine(2503) in 23S rRNA + 5'-deoxyadenosine + L-methionine + 2 oxidized [2Fe-2S]-[ferredoxin] + S-adenosyl-L-homocysteine. The enzyme catalyses adenosine(37) in tRNA + 2 reduced [2Fe-2S]-[ferredoxin] + 2 S-adenosyl-L-methionine = 2-methyladenosine(37) in tRNA + 5'-deoxyadenosine + L-methionine + 2 oxidized [2Fe-2S]-[ferredoxin] + S-adenosyl-L-homocysteine. Its function is as follows. Specifically methylates position 2 of adenine 2503 in 23S rRNA and position 2 of adenine 37 in tRNAs. The sequence is that of Probable dual-specificity RNA methyltransferase RlmN from Streptococcus pyogenes serotype M18 (strain MGAS8232).